We begin with the raw amino-acid sequence, 385 residues long: MKLRAEDVLANGTSRHKVQIDMERQVQIAKDLLAQKKFLEAAKRCQQTLDSLPKDGLLPDPELFTIFAQAVYNMEVQNSGNLFGDALLAGDDGSGSESESEPESDVSNGEEGNENGQTEIPNSRMFQFDQEEEDLTGDVDSGDSEDSGEGSEEEEENVEKEEERLALHELANFSPANEHDDEIEDVSQLRKSGFHIYFENDLYENALDLLAQALMLLGRPTADGQSLTENSRLRIGDVYILMGDIEREAEMFSRAIHHYLKALGYYKTLKPAEQVTEKVIQAEFLVCDALRWVDQVPAKDKLKRFKHAKALLEKHMTTRPKDSELQQARLAQIQDDIDEVQENQQHGSKRPLSQPTTSIGFPALEKPLGDFNDLSQLVKKKPRRH.

An important for interaction with heterotetrameric histone H3 and H4 and for interaction with dimeric histone H2A and H2B region spans residues 80 to 199 (GNLFGDALLA…RKSGFHIYFE (120 aa)). Low complexity-rich tracts occupy residues 85-97 (DALL…SGSE) and 105-116 (DVSNGEEGNENG). Positions 85–163 (DALLAGDDGS…EEENVEKEEE (79 aa)) are disordered. Over residues 129 to 160 (DQEEEDLTGDVDSGDSEDSGEGSEEEEENVEK) the composition is skewed to acidic residues. A Phosphoserine modification is found at Ser174. 3 TPR repeats span residues 186-220 (VSQL…LGRP), 229-262 (ENSR…YLKA), and 289-322 (ALRW…RPKD). The interaction with dimeric histone H2A and H2B stretch occupies residues 248–332 (EAEMFSRAIH…SELQQARLAQ (85 aa)). The segment at 340–385 (VQENQQHGSKRPLSQPTTSIGFPALEKPLGDFNDLSQLVKKKPRRH) is disordered. Positions 342–359 (ENQQHGSKRPLSQPTTSI) are enriched in polar residues.

This sequence belongs to the NASP family. As to quaternary structure, homodimer. The homodimer interacts with a histone tetramer containing H3 and H4; the interaction is direct. The homodimer interacts with heterodimeric histone H2A and H2B; the interaction is direct. Component of the nuclear histone acetyltransferase B (HAT-B) complex composed of at least HAT1, HAT2 and HIF1. Does not interact with HAT1 in the absence of HAT2. Interacts with histones H3 and H4 in a HAT1/HAT2 dependent manner. Interaction with heterotetrameric histone H3 and H4 precludes interaction with dimeric histone H2A and H2B, irrespective of the fact that their binding involves non-identical regions of the protein.

Its subcellular location is the nucleus. Functionally, histone H3 and H4 specific chaperone component of the nuclear histone acetyltransferase B (HAT-B) complex. Involved in chromatin assembly and telomere silencing. The protein is HAT1-interacting factor 1 (HIF1) of Saccharomyces cerevisiae (strain ATCC 204508 / S288c) (Baker's yeast).